The sequence spans 121 residues: Small ribosomal subunit protein bS6 (121 aa).

The tract at residues 99–121 is disordered; it reads PLPAPRVAPGTEAPAEPEAAAPA. Positions 110–121 are enriched in low complexity; sequence EAPAEPEAAAPA.

This sequence belongs to the bacterial ribosomal protein bS6 family.

In terms of biological role, binds together with bS18 to 16S ribosomal RNA. The protein is Small ribosomal subunit protein bS6 of Synechococcus sp. (strain CC9311).